The chain runs to 352 residues: Cuticle collagen dpy-17 (352 aa).

Positions 1 to 29 (MSVFAGYAACTLGAVSMLLCVSLVPQVYQ) are cleaved as a signal peptide. The segment at 61 to 64 (RVRR) is furin-like endopeptidase recognition region. Disordered stretches follow at residues 73–143 (GGYG…GPGD) and 156–352 (GPAG…GYRN). The segment covering 87 to 97 (GPHGGFPGGPQ) has biased composition (gly residues). 4 triple-helical region regions span residues 156 to 182 (GPAG…DGED), 202 to 264 (GPQG…DVEH), 267 to 290 (GLPG…QGDR), and 294 to 329 (GIAG…PGQD). In terms of domain architecture, Collagen-like spans 202-259 (GPQGPPGSQGKPGARGMRGARGQAAMPGRDGSPGMPGSLGPIGPPGAAGEEGPTGEPG). Over residues 207–259 (PGSQGKPGARGMRGARGQAAMPGRDGSPGMPGSLGPIGPPGAAGEEGPTGEPG) the composition is skewed to low complexity. A compositionally biased stretch (polar residues) spans 337 to 352 (QRNTNAAVSGNQGYRN).

Belongs to the cuticular collagen family. Collagen polypeptide chains are complexed within the cuticle by disulfide bonds and other types of covalent cross-links.

The protein localises to the secreted. The protein resides in the extracellular space. In terms of biological role, secreted collagen that forms part of the nematode cuticle, which functions as an exoskeleton and a barrier to protect the worm from its environment. Secretion and subsequent incorporation into the cuticle is likely mediated by bli-4, which probably cleaves at the N-terminal consensus furin cleavage site. This is Cuticle collagen dpy-17 from Caenorhabditis elegans.